The following is a 645-amino-acid chain: Threonine--tRNA ligase (645 aa).

The region spanning 1–62 (MSIHITFPDG…VEDGSLEIVT (62 aa)) is the TGS domain. Residues 242-541 (DHRKLGKELD…LTEVYKGAFP (300 aa)) form a catalytic region. Zn(2+) is bound by residues Cys336, His387, and His518.

It belongs to the class-II aminoacyl-tRNA synthetase family. In terms of assembly, homodimer. Requires Zn(2+) as cofactor.

It localises to the cytoplasm. It catalyses the reaction tRNA(Thr) + L-threonine + ATP = L-threonyl-tRNA(Thr) + AMP + diphosphate + H(+). Its function is as follows. Catalyzes the attachment of threonine to tRNA(Thr) in a two-step reaction: L-threonine is first activated by ATP to form Thr-AMP and then transferred to the acceptor end of tRNA(Thr). Also edits incorrectly charged L-seryl-tRNA(Thr). The sequence is that of Threonine--tRNA ligase from Enterococcus faecalis (strain ATCC 700802 / V583).